Reading from the N-terminus, the 329-residue chain is Quinone-oxidoreductase QR1, chloroplastic (329 aa).

This sequence belongs to the zinc-containing alcohol dehydrogenase family. Quinone oxidoreductase subfamily.

The protein localises to the plastid. The protein resides in the chloroplast outer membrane. It catalyses the reaction 2 a quinone + NADPH + H(+) = 2 a 1,4-benzosemiquinone + NADP(+). Inhibited by dicumarol. NADPH-dependent single-electron reducing quinone reductase. Involved in haustorium initiation in parasitic plants through redox cycling of exogenous haustorium-inducing factors. Can use 9,10-phenanthrenequinone (PAQ), 1,2-naphthoquinone, 5-hydroxy-1,4-naphthoquinone (juglone) and 2,6-dimethoxy-p-benzoquinone (DMBQ) as substrates, but has no activity with menadione, diamide, 2,3-dimethoxy-5-methyl-1,4-benzoquinone or 1,4-naphthoquinone. This chain is Quinone-oxidoreductase QR1, chloroplastic, found in Triphysaria versicolor (Yellow owl's clover).